The sequence spans 636 residues: DNA gyrase subunit B (636 aa).

Positions 421 to 535 (TELFIVEGDS…QGRVYIALPP (115 aa)) constitute a Toprim domain. Residues E427, D500, and D502 each coordinate Mg(2+).

The protein belongs to the type II topoisomerase GyrB family. In terms of assembly, heterotetramer, composed of two GyrA and two GyrB chains. In the heterotetramer, GyrA contains the active site tyrosine that forms a transient covalent intermediate with DNA, while GyrB binds cofactors and catalyzes ATP hydrolysis. It depends on Mg(2+) as a cofactor. Mn(2+) serves as cofactor. Ca(2+) is required as a cofactor.

Its subcellular location is the cytoplasm. It carries out the reaction ATP-dependent breakage, passage and rejoining of double-stranded DNA.. A type II topoisomerase that negatively supercoils closed circular double-stranded (ds) DNA in an ATP-dependent manner to modulate DNA topology and maintain chromosomes in an underwound state. Negative supercoiling favors strand separation, and DNA replication, transcription, recombination and repair, all of which involve strand separation. Also able to catalyze the interconversion of other topological isomers of dsDNA rings, including catenanes and knotted rings. Type II topoisomerases break and join 2 DNA strands simultaneously in an ATP-dependent manner. This chain is DNA gyrase subunit B, found in Thermotoga maritima (strain ATCC 43589 / DSM 3109 / JCM 10099 / NBRC 100826 / MSB8).